The primary structure comprises 499 residues: Lysine--tRNA ligase (499 aa).

Mg(2+)-binding residues include E403 and E410.

This sequence belongs to the class-II aminoacyl-tRNA synthetase family. Homodimer. Mg(2+) serves as cofactor.

Its subcellular location is the cytoplasm. The enzyme catalyses tRNA(Lys) + L-lysine + ATP = L-lysyl-tRNA(Lys) + AMP + diphosphate. In Campylobacter hominis (strain ATCC BAA-381 / DSM 21671 / CCUG 45161 / LMG 19568 / NCTC 13146 / CH001A), this protein is Lysine--tRNA ligase.